A 239-amino-acid polypeptide reads, in one-letter code: Ribonuclease PH (239 aa).

Residues Arg87 and 125–127 (GTR) contribute to the phosphate site.

This sequence belongs to the RNase PH family. In terms of assembly, homohexameric ring arranged as a trimer of dimers.

The catalysed reaction is tRNA(n+1) + phosphate = tRNA(n) + a ribonucleoside 5'-diphosphate. Functionally, phosphorolytic 3'-5' exoribonuclease that plays an important role in tRNA 3'-end maturation. Removes nucleotide residues following the 3'-CCA terminus of tRNAs; can also add nucleotides to the ends of RNA molecules by using nucleoside diphosphates as substrates, but this may not be physiologically important. Probably plays a role in initiation of 16S rRNA degradation (leading to ribosome degradation) during starvation. The chain is Ribonuclease PH from Syntrophomonas wolfei subsp. wolfei (strain DSM 2245B / Goettingen).